Consider the following 45-residue polypeptide: Large ribosomal subunit protein bL34 (45 aa).

The tract at residues 1 to 45 (MTKRTFGGTSRKRKRVSGFRVRMRSHTGRRVIKSRRKRGRERIAV) is disordered. Residues 10-45 (SRKRKRVSGFRVRMRSHTGRRVIKSRRKRGRERIAV) are compositionally biased toward basic residues.

The protein belongs to the bacterial ribosomal protein bL34 family.

This Prochlorococcus marinus subsp. pastoris (strain CCMP1986 / NIES-2087 / MED4) protein is Large ribosomal subunit protein bL34.